Reading from the N-terminus, the 198-residue chain is C4b-binding protein beta chain (198 aa).

The signal sequence occupies residues 1-17 (MFFWLMCYLVDVWLISA). A Sushi 1; atypical; lacks a Cys domain is found at 22–77 (HCPDPLLVTDEFSSLEPVNVNDTFMFKCNEHCIFKGSNWSQCRENHTRVTHSPVSK). N-linked (GlcNAc...) asparagine glycans are attached at residues Asn-42, Asn-59, and Asn-66. In terms of domain architecture, Sushi 2 spans 79-135 (RDCGPPETPTHGYFEGRDFKSGSTITYYCEARYRLVGTQHQQCIDGEWTSAPPICEL). Disulfide bonds link Cys-81–Cys-121 and Cys-107–Cys-133.

As to quaternary structure, disulfide-linked complex of alpha and beta chains.

Its subcellular location is the secreted. Controls the classical pathway of complement activation. It binds as a cofactor to C3b/C4b inactivator (C3bINA), which then hydrolyzes the complement fragment C4b. It also accelerates the degradation of the C4bC2a complex (C3 convertase) by dissociating the complement fragment C2a. It also interacts with serum amyloid P component. This chain is C4b-binding protein beta chain (C4BPB), found in Bos taurus (Bovine).